The following is a 218-amino-acid chain: Very-long-chain (3R)-3-hydroxyacyl-CoA dehydratase hpo-8 (218 aa).

Helical transmembrane passes span 15–35, 44–64, 86–106, 137–157, and 176–196; these read ILGW…GLTW, FELK…IVGL, ILHL…LVAW, LFYV…FASL, and MGIS…PGFP. Catalysis depends on residues Tyr-142 and Glu-149.

It belongs to the very long-chain fatty acids dehydratase HACD family.

It localises to the membrane. It carries out the reaction a very-long-chain (3R)-3-hydroxyacyl-CoA = a very-long-chain (2E)-enoyl-CoA + H2O. It functions in the pathway lipid metabolism; fatty acid biosynthesis. Catalyzes the third of the four reactions of the long-chain fatty acids elongation cycle. This endoplasmic reticulum-bound enzymatic process, allows the addition of two carbons to the chain of long- and very long-chain fatty acids/VLCFAs per cycle. This enzyme catalyzes the dehydration of the 3-hydroxyacyl-CoA intermediate into trans-2,3-enoyl-CoA, within each cycle of fatty acid elongation. Thereby, it participates in the production of VLCFAs of different chain lengths that are involved in multiple biological processes as precursors of membrane lipids and lipid mediators. The polypeptide is Very-long-chain (3R)-3-hydroxyacyl-CoA dehydratase hpo-8 (hpo-8) (Caenorhabditis elegans).